We begin with the raw amino-acid sequence, 349 residues long: tRNA pseudouridine synthase D (349 aa).

Residue Phe27 participates in substrate binding. Asp80 acts as the Nucleophile in catalysis. Residue Asn129 coordinates substrate. One can recognise a TRUD domain in the interval 155–303 (GVPNYFGAQR…VEAARRAMLL (149 aa)). Phe329 contributes to the substrate binding site.

This sequence belongs to the pseudouridine synthase TruD family.

It carries out the reaction uridine(13) in tRNA = pseudouridine(13) in tRNA. Responsible for synthesis of pseudouridine from uracil-13 in transfer RNAs. This is tRNA pseudouridine synthase D from Escherichia coli (strain SMS-3-5 / SECEC).